Reading from the N-terminus, the 583-residue chain is MEVQSSSNNGGHSSFSSLRVYLNSLSATPSRLSRRAISVSTSSDEMSRVRAVSGEQMRRTLRWYDLIGLGIGGMVGAGVFVTTGRASRLDAGPSIVVSYAIAGLCALLSAFCYTEFAVHLPVAGGAFSYIRITFGEFPAFFTGANLVMDYVMSNAAVSRSFTAYLGTAFGISTSKWRFVVSGLPKGFNEIDPVAVLVVLVITVIICCSTRESSKVNMIMTAFHIAFIFFVIVMGFIKGDSKNLSSPANPEHPSGFFPFGAAGVFNGAAMVYLSYIGYDAVSTMAEEVENPVKDIPVGVSGSVAIVTVLYCLMAVSMSMLLPYDLIDPEAPFSAAFRGSNGWEWVTKVVGIGASFGILTSLLVAMLGQARYMCVIGRSRVVPFWFAKIHPKTSTPVNASTFLGIFTAALALFTDLNVLLNLVSIGTLFVFYMVANALIFRRYVPVGPTKPWPTLCFLTLFSITSLVFTLIWKLVPEGKPKAFMLGASAVVAIAIVLSFQCVVPQARKPELWGVPFMPWTPCVSIFLNIFLLGSLDAPSYVRFGFFSGLIVLVYLFYGVHASSDAEANGSFGVKDGQVMKELIEV.

Residues 1-50 constitute a chloroplast transit peptide; sequence MEVQSSSNNGGHSSFSSLRVYLNSLSATPSRLSRRAISVSTSSDEMSRVR. The next 14 membrane-spanning stretches (helical) occupy residues 63 to 83, 91 to 111, 132 to 152, 186 to 206, 216 to 236, 255 to 275, 294 to 314, 347 to 367, 397 to 417, 418 to 438, 450 to 470, 481 to 501, 509 to 529, and 541 to 561; these read WYDLIGLGIGGMVGAGVFVTT, AGPSIVVSYAIAGLCALLSAF, ITFGEFPAFFTGANLVMDYVM, GFNEIDPVAVLVVLVITVIIC, NMIMTAFHIAFIFFVIVMGFI, FFPFGAAGVFNGAAMVYLSYI, IPVGVSGSVAIVTVLYCLMAV, VVGIGASFGILTSLLVAMLGQ, ASTFLGIFTAALALFTDLNVL, LNLVSIGTLFVFYMVANALIF, WPTLCFLTLFSITSLVFTLIW, FMLGASAVVAIAIVLSFQCVV, LWGVPFMPWTPCVSIFLNIFL, and FGFFSGLIVLVYLFYGVHASS.

It belongs to the amino acid-polyamine-organocation (APC) superfamily. Cationic amino acid transporter (CAT) (TC 2.A.3.3) family. As to expression, expressed in roots, stems, flowers, and leaves.

It localises to the plastid. It is found in the chloroplast membrane. In terms of biological role, permease involved in the transport of the cationic neutral or acidic amino acids. This is Cationic amino acid transporter 6, chloroplastic (CAT6) from Arabidopsis thaliana (Mouse-ear cress).